We begin with the raw amino-acid sequence, 152 residues long: Transcriptional regulator MraZ (152 aa).

SpoVT-AbrB domains are found at residues 5–52 and 81–124; these read ATLV…PLPE and ASEC…DETT.

This sequence belongs to the MraZ family. In terms of assembly, forms oligomers.

The protein resides in the cytoplasm. Its subcellular location is the nucleoid. Negatively regulates its own expression and that of the subsequent genes in the proximal part of the division and cell wall (dcw) gene cluster. Acts by binding directly to DNA. May also regulate the expression of genes outside the dcw cluster. This Citrobacter koseri (strain ATCC BAA-895 / CDC 4225-83 / SGSC4696) protein is Transcriptional regulator MraZ.